The following is a 202-amino-acid chain: Flagellar transcriptional regulator FlhC (202 aa).

Positions 137, 140, 157, and 160 each coordinate Zn(2+).

Belongs to the FlhC family. In terms of assembly, heterohexamer composed of two FlhC and four FlhD subunits. Each FlhC binds a FlhD dimer, forming a heterotrimer, and a hexamer assembles by dimerization of two heterotrimers. Requires Zn(2+) as cofactor.

It localises to the cytoplasm. Its function is as follows. Functions in complex with FlhD as a master transcriptional regulator that regulates transcription of several flagellar and non-flagellar operons by binding to their promoter region. Activates expression of class 2 flagellar genes, including fliA, which is a flagellum-specific sigma factor that turns on the class 3 genes. Also regulates genes whose products function in a variety of physiological pathways. This Variovorax paradoxus (strain S110) protein is Flagellar transcriptional regulator FlhC.